The following is a 330-amino-acid chain: Olfactory receptor 5P73 (330 aa).

The Extracellular segment spans residues 1–28 (MAFLEDGNHTTVTEFFLLGLTDDPVLRD). Asparagine 8 carries N-linked (GlcNAc...) asparagine glycosylation. Residues 29 to 49 (ILFIIILCIYLVTVSGNLSTI) traverse the membrane as a helical segment. At 50-57 (LLIRVSSQ) the chain is on the cytoplasmic side. A helical transmembrane segment spans residues 58–78 (LHHPMYFILSHLASVDIGISS). Over 79 to 102 (SVTPNMLATFLVKQNTISYIGCSI) the chain is Extracellular. Cysteine 100 and cysteine 192 are oxidised to a cystine. The helical transmembrane segment at 103–123 (QFTSAAFFGTVECFLLATMAY) threads the bilayer. At 124–136 (DRFVAICNPLLYS) the chain is on the cytoplasmic side. Residues 137–157 (TKMSTEACIQLVVGSYIQGFL) traverse the membrane as a helical segment. At 158–199 (NASFFTLSFFSLFFCGPNRINDFYCDFAPLLELSCSDVTVAV) the chain is on the extracellular side. Residues 200 to 220 (VITSISAGFITLTTVFVIAIS) form a helical membrane-spanning segment. Over 221 to 240 (YSCIFITIMKMHSTESRCKA) the chain is Cytoplasmic. The chain crosses the membrane as a helical span at residues 241–261 (FSTCTSHLTAVILFYGTAIFI). At 262–274 (YVMPKSSYSTDQN) the chain is on the extracellular side. The helical transmembrane segment at 275–295 (KVLSIFYTVVIPMLNPLIYSL) threads the bilayer. Residues 296–330 (RNNEIKEALKRHLGKKVFSYGNLFCKTHYNHNYPV) lie on the Cytoplasmic side of the membrane.

The protein belongs to the G-protein coupled receptor 1 family.

It localises to the cell membrane. Functionally, potential odorant receptor. The chain is Olfactory receptor 5P73 from Mus musculus (Mouse).